A 208-amino-acid chain; its full sequence is Small ribosomal subunit protein uS3 (208 aa).

The region spanning 16 to 85 (IDEYFKKELS…KPQIDVKPVE (70 aa)) is the KH type-2 domain.

Belongs to the universal ribosomal protein uS3 family. Part of the 30S ribosomal subunit.

Its function is as follows. Binds the lower part of the 30S subunit head. This chain is Small ribosomal subunit protein uS3, found in Methanocaldococcus jannaschii (strain ATCC 43067 / DSM 2661 / JAL-1 / JCM 10045 / NBRC 100440) (Methanococcus jannaschii).